The primary structure comprises 483 residues: Malonate-semialdehyde dehydrogenase 2 (483 aa).

Residues Phe-152, Lys-176, Glu-179, Arg-180, and Ser-229 each contribute to the NAD(+) site. The Nucleophile role is filled by Cys-284. Glu-384 lines the NAD(+) pocket.

The protein belongs to the aldehyde dehydrogenase family. IolA subfamily. Homotetramer.

It carries out the reaction 3-oxopropanoate + NAD(+) + CoA + H2O = hydrogencarbonate + acetyl-CoA + NADH + H(+). The enzyme catalyses 2-methyl-3-oxopropanoate + NAD(+) + CoA + H2O = propanoyl-CoA + hydrogencarbonate + NADH + H(+). It participates in polyol metabolism; myo-inositol degradation into acetyl-CoA; acetyl-CoA from myo-inositol: step 7/7. Its function is as follows. Catalyzes the oxidation of malonate semialdehyde (MSA) and methylmalonate semialdehyde (MMSA) into acetyl-CoA and propanoyl-CoA, respectively. Is involved in a myo-inositol catabolic pathway. Bicarbonate, and not CO2, is the end-product of the enzymatic reaction. The sequence is that of Malonate-semialdehyde dehydrogenase 2 from Bacillus mycoides (strain KBAB4) (Bacillus weihenstephanensis).